We begin with the raw amino-acid sequence, 269 residues long: uncharacterized protein (269 aa).

The tract at residues methionine 1 to cysteine 22 is disordered.

This is an uncharacterized protein from Gallus gallus (Chicken).